A 310-amino-acid polypeptide reads, in one-letter code: Porphobilinogen deaminase (310 aa).

C240 is modified (S-(dipyrrolylmethanemethyl)cysteine).

The protein belongs to the HMBS family. In terms of assembly, monomer. It depends on dipyrromethane as a cofactor.

The enzyme catalyses 4 porphobilinogen + H2O = hydroxymethylbilane + 4 NH4(+). It participates in porphyrin-containing compound metabolism; protoporphyrin-IX biosynthesis; coproporphyrinogen-III from 5-aminolevulinate: step 2/4. Tetrapolymerization of the monopyrrole PBG into the hydroxymethylbilane pre-uroporphyrinogen in several discrete steps. This Desulfosudis oleivorans (strain DSM 6200 / JCM 39069 / Hxd3) (Desulfococcus oleovorans) protein is Porphobilinogen deaminase.